The following is a 207-amino-acid chain: Nodulation protein S (207 aa).

Belongs to the NodS family.

SAM-utilizing methyltransferase involved in nod factor synthesis. In Azorhizobium caulinodans (strain ATCC 43989 / DSM 5975 / JCM 20966 / LMG 6465 / NBRC 14845 / NCIMB 13405 / ORS 571), this protein is Nodulation protein S (nodS).